We begin with the raw amino-acid sequence, 333 residues long: Beta-ketoacyl-[acyl-carrier-protein] synthase III (333 aa).

Active-site residues include cysteine 116 and histidine 258. The tract at residues 259 to 263 (QANQR) is ACP-binding. Asparagine 288 is a catalytic residue.

The protein belongs to the thiolase-like superfamily. FabH family. As to quaternary structure, homodimer.

The protein resides in the cytoplasm. It carries out the reaction malonyl-[ACP] + acetyl-CoA + H(+) = 3-oxobutanoyl-[ACP] + CO2 + CoA. It participates in lipid metabolism; fatty acid biosynthesis. In terms of biological role, catalyzes the condensation reaction of fatty acid synthesis by the addition to an acyl acceptor of two carbons from malonyl-ACP. Catalyzes the first condensation reaction which initiates fatty acid synthesis and may therefore play a role in governing the total rate of fatty acid production. Possesses both acetoacetyl-ACP synthase and acetyl transacylase activities. Its substrate specificity determines the biosynthesis of branched-chain and/or straight-chain of fatty acids. This chain is Beta-ketoacyl-[acyl-carrier-protein] synthase III, found in Microcystis aeruginosa (strain NIES-843 / IAM M-2473).